A 156-amino-acid chain; its full sequence is 6,7-dimethyl-8-ribityllumazine synthase (156 aa).

Residues phenylalanine 22, 56–58 (AME), and 80–82 (AVI) contribute to the 5-amino-6-(D-ribitylamino)uracil site. 85-86 (ET) contacts (2S)-2-hydroxy-3-oxobutyl phosphate. Residue histidine 88 is the Proton donor of the active site. A 5-amino-6-(D-ribitylamino)uracil-binding site is contributed by phenylalanine 113. (2S)-2-hydroxy-3-oxobutyl phosphate is bound at residue arginine 127.

Belongs to the DMRL synthase family.

The enzyme catalyses (2S)-2-hydroxy-3-oxobutyl phosphate + 5-amino-6-(D-ribitylamino)uracil = 6,7-dimethyl-8-(1-D-ribityl)lumazine + phosphate + 2 H2O + H(+). It functions in the pathway cofactor biosynthesis; riboflavin biosynthesis; riboflavin from 2-hydroxy-3-oxobutyl phosphate and 5-amino-6-(D-ribitylamino)uracil: step 1/2. Its function is as follows. Catalyzes the formation of 6,7-dimethyl-8-ribityllumazine by condensation of 5-amino-6-(D-ribitylamino)uracil with 3,4-dihydroxy-2-butanone 4-phosphate. This is the penultimate step in the biosynthesis of riboflavin. The chain is 6,7-dimethyl-8-ribityllumazine synthase from Kosmotoga olearia (strain ATCC BAA-1733 / DSM 21960 / TBF 19.5.1).